Reading from the N-terminus, the 931-residue chain is Chitin synthase III (931 aa).

N-linked (GlcNAc...) asparagine glycans are attached at residues asparagine 37 and asparagine 94. The segment at proline 93–leucine 154 is disordered. Positions glycine 102–glycine 122 are enriched in gly residues. An N-linked (GlcNAc...) asparagine glycan is attached at asparagine 558. The next 5 membrane-spanning stretches (helical) occupy residues phenylalanine 585–leucine 605, isoleucine 644–alanine 664, isoleucine 677–leucine 697, valine 731–leucine 751, and serine 759–phenylalanine 779. A glycan (N-linked (GlcNAc...) asparagine) is linked at asparagine 802. The next 2 helical transmembrane spans lie at threonine 858–aspartate 878 and phenylalanine 899–leucine 919.

This sequence belongs to the chitin synthase family. Class III subfamily. In terms of tissue distribution, highly expressed in conidia and during appressorium formation.

The protein resides in the cell membrane. The enzyme catalyses [(1-&gt;4)-N-acetyl-beta-D-glucosaminyl](n) + UDP-N-acetyl-alpha-D-glucosamine = [(1-&gt;4)-N-acetyl-beta-D-glucosaminyl](n+1) + UDP + H(+). In terms of biological role, polymerizes chitin, a structural polymer of the cell wall and septum, by transferring the sugar moiety of UDP-GlcNAc to the non-reducing end of the growing chitin polymer. Contributes to the production of conidia and the ability of fungal conidia to germinate. Involved in the fungal cell wall integrity and the ability of conidia to withstand biophysical pressure. Required for appressorium formation and evasion of insect cellular and/or humoral defenses, promoting the fungal dimorphic transition to the production of hyphal bodies that occurs within hosts, and ultimately to virulence. The polypeptide is Chitin synthase III (Metarhizium acridum (strain CQMa 102)).